A 613-amino-acid polypeptide reads, in one-letter code: Ribosome-associated molecular chaperone SSB2 (613 aa).

A2 carries the post-translational modification N-acetylalanine. The tract at residues 2-391 is nucleotide binding domain (NBD); sequence AEGVFQGAIG…ILTGQSTSDE (390 aa). 16–18 serves as a coordination point for ATP; it reads TTY. Position 47 is a phosphothreonine (T47). Residues K73, 205 to 207, 271 to 278, and G342 contribute to the ATP site; these read GGT and ERAKRTLS. Residues 392 to 402 form an inter-domain linker region; it reads TKDLLLLDVAP. The segment at 403–613 is substrate binding domain (SBD); the sequence is LSLGVGMQGD…RVVTKAMSSR (211 aa). A Contributes to ribosome binding motif is present at residues 428–430; that stretch reads KRR. Position 431 is a phosphothreonine (T431). The interval 516-612 is lid domain (SBDalpha); sequence SEEIEKMVNQ…KRVVTKAMSS (97 aa). Positions 574 to 582 match the Nuclear export signal motif; that stretch reads IEAALSDAL. The required for interaction with ribosomes stretch occupies residues 601–613; that stretch reads GLKRVVTKAMSSR.

This sequence belongs to the heat shock protein 70 family. Ssb-type Hsp70 subfamily. Binds to ribosomes. Binds close to the ribosomal tunnel exit via contacts with both ribosomal proteins RPL35, RPL39 and RPL19, and rRNA. Directly interacts with nascent polypeptides. This interaction is dependent on the ribosome-associated complex (RAC). Interacts with SSE1.

It localises to the cytoplasm. The catalysed reaction is ATP + H2O = ADP + phosphate + H(+). Ribosome-bound, Hsp70-type chaperone that assists in the cotranslational folding of newly synthesized proteins in the cytosol. Stimulates folding by interacting with nascent chains, binding to short, largely hydrophobic sequences exposed by unfolded proteins, thereby stabilizing longer, more slowly translated, and aggregation-prone nascent polypeptides and domains that cannot fold stably until fully synthesized. The Hsp70-protein substrate interaction depends on ATP-binding and on allosteric regulation between the NBD and the SBD. The ATP-bound state is characterized by a fast exchange rate of substrate (low affinity state), while in the ADP-bound state exchange is much slower (high affinity state). During the Hsp70 cycle, the chaperone switches between the ATP-bound state (open conformation) and the ADP-bound state (closed conformation) by major conformational rearrangements involving mainly the lid domain. Ssb cooperates with a specific Hsp40/Hsp70 co-chaperone termed the ribosome-associated complex (RAC), which stimulates the ATPase activity of the ribosome-associated pool of Ssbs and switches it to the high affinity substrate binding state. Hsp110 chaperone SSE1 and FES1 act as nucleotide exchange factors that cause substrate release. This is Ribosome-associated molecular chaperone SSB2 from Saccharomyces cerevisiae (strain ATCC 204508 / S288c) (Baker's yeast).